Here is a 255-residue protein sequence, read N- to C-terminus: Acetyl-coenzyme A carboxylase carboxyl transferase subunit alpha (255 aa).

One can recognise a CoA carboxyltransferase C-terminal domain in the interval 1-235; sequence MNIAKIVREA…KKELQTELAR (235 aa).

Belongs to the AccA family. In terms of assembly, acetyl-CoA carboxylase is a heterohexamer composed of biotin carboxyl carrier protein (AccB), biotin carboxylase (AccC) and two subunits each of ACCase subunit alpha (AccA) and ACCase subunit beta (AccD).

The protein resides in the cytoplasm. The catalysed reaction is N(6)-carboxybiotinyl-L-lysyl-[protein] + acetyl-CoA = N(6)-biotinyl-L-lysyl-[protein] + malonyl-CoA. Its pathway is lipid metabolism; malonyl-CoA biosynthesis; malonyl-CoA from acetyl-CoA: step 1/1. In terms of biological role, component of the acetyl coenzyme A carboxylase (ACC) complex. First, biotin carboxylase catalyzes the carboxylation of biotin on its carrier protein (BCCP) and then the CO(2) group is transferred by the carboxyltransferase to acetyl-CoA to form malonyl-CoA. This is Acetyl-coenzyme A carboxylase carboxyl transferase subunit alpha from Streptococcus pneumoniae serotype 19F (strain G54).